We begin with the raw amino-acid sequence, 105 residues long: Small cysteine and glycine repeat-containing protein 6 (105 aa).

Positions 4-83 are 13 X 2 AA repeats of CG; sequence CGCGGCGGGC…HSCGCGCGCG (80 aa).

Belongs to the KRTAP type 28 family.

Functionally, in the hair cortex, hair keratin intermediate filaments are embedded in an interfilamentous matrix, consisting of hair keratin-associated proteins (KRTAP), which are essential for the formation of a rigid and resistant hair shaft through their extensive disulfide bond cross-linking with abundant cysteine residues of hair keratins. The matrix proteins include the high-sulfur and high-glycine-tyrosine keratins. The sequence is that of Small cysteine and glycine repeat-containing protein 6 from Homo sapiens (Human).